Consider the following 219-residue polypeptide: Claudin-3 (219 aa).

The Cytoplasmic segment spans residues 1 to 8 (MSMGLEIT). Residues 9–29 (GTSLAVLGWLCTIVCCALPMW) form a helical membrane-spanning segment. The Extracellular segment spans residues 30–80 (RVSAFIGSSIITAQITWEGLWMNCVVQSTGQMQCKMYDSLLALPQDLQAAR). A helical membrane pass occupies residues 81-101 (ALIVVSILLAAFGLLVALVGA). Topologically, residues 102–115 (QCTNCVQDETAKAK) are cytoplasmic. A helical transmembrane segment spans residues 116–136 (ITIVAGVLFLLAAVLTLVPVS). The Extracellular portion of the chain corresponds to 137-161 (WSANTIIRDFYNPLVPEAQKREMGT). Residues 162–182 (GLYVGWAAAALQLLGGALLCC) traverse the membrane as a helical segment. The Cytoplasmic segment spans residues 183 to 219 (SCPPREKYAPTKILYSAPRSTGPGTGTGTAYDRKDYV). Phosphotyrosine is present on Tyr197. Ser198 is modified (phosphoserine). The tract at residues 218-219 (YV) is interactions with TJP1, TJP2 and TJP3.

The protein belongs to the claudin family. Can form homo- and heteropolymers with other CLDN. Homopolymers interact with CLDN1 and CLDN2 homopolymers. Interacts in cis (within the same plasma membrane) with CLDN19. Directly interacts with TJP1/ZO-1, TJP2/ZO-2 and TJP3/ZO-3.

The protein localises to the cell junction. Its subcellular location is the tight junction. It is found in the cell membrane. Plays a major role in tight junction-specific obliteration of the intercellular space, through calcium-independent cell-adhesion activity. This Rattus norvegicus (Rat) protein is Claudin-3 (Cldn3).